Consider the following 387-residue polypeptide: Succinate--CoA ligase [ADP-forming] subunit beta (387 aa).

Residues 9-236 form the ATP-grasp domain; the sequence is KELFAKHNVP…KDATDPLELK (228 aa). ATP is bound by residues K45, 52 to 54, S94, and E99; that span reads GRG. Mg(2+)-binding residues include N191 and D205. Residues N256 and 318–320 each bind substrate; that span reads GIT.

This sequence belongs to the succinate/malate CoA ligase beta subunit family. Heterotetramer of two alpha and two beta subunits. The cofactor is Mg(2+).

The catalysed reaction is succinate + ATP + CoA = succinyl-CoA + ADP + phosphate. The enzyme catalyses GTP + succinate + CoA = succinyl-CoA + GDP + phosphate. It participates in carbohydrate metabolism; tricarboxylic acid cycle; succinate from succinyl-CoA (ligase route): step 1/1. Succinyl-CoA synthetase functions in the citric acid cycle (TCA), coupling the hydrolysis of succinyl-CoA to the synthesis of either ATP or GTP and thus represents the only step of substrate-level phosphorylation in the TCA. The beta subunit provides nucleotide specificity of the enzyme and binds the substrate succinate, while the binding sites for coenzyme A and phosphate are found in the alpha subunit. In Mycolicibacterium vanbaalenii (strain DSM 7251 / JCM 13017 / BCRC 16820 / KCTC 9966 / NRRL B-24157 / PYR-1) (Mycobacterium vanbaalenii), this protein is Succinate--CoA ligase [ADP-forming] subunit beta.